The following is a 777-amino-acid chain: Protein translocase subunit SecA (777 aa).

ATP contacts are provided by residues Gln94, 112 to 116 (GEGKT), and Asp501.

Belongs to the SecA family. Monomer and homodimer. Part of the essential Sec protein translocation apparatus which comprises SecA, SecYEG and auxiliary proteins SecDF. Other proteins may also be involved.

Its subcellular location is the cell membrane. It is found in the cytoplasm. The enzyme catalyses ATP + H2O + cellular proteinSide 1 = ADP + phosphate + cellular proteinSide 2.. In terms of biological role, part of the Sec protein translocase complex. Interacts with the SecYEG preprotein conducting channel. Has a central role in coupling the hydrolysis of ATP to the transfer of proteins into and across the cell membrane, serving as an ATP-driven molecular motor driving the stepwise translocation of polypeptide chains across the membrane. The polypeptide is Protein translocase subunit SecA (Mycobacterium avium (strain 104)).